The following is a 369-amino-acid chain: Methionine import ATP-binding protein MetN 1 (369 aa).

The tract at residues 1–26 is disordered; it reads MTTMTVPPSLLPLEPFPTAPDTRAST. An ABC transporter domain is found at 29 to 265; that stretch reads IRLHGLGKRY…PRHAVTRSLL (237 aa). 62 to 69 contacts ATP; it reads GRSGAGKS.

Belongs to the ABC transporter superfamily. Methionine importer (TC 3.A.1.24) family. As to quaternary structure, the complex is composed of two ATP-binding proteins (MetN), two transmembrane proteins (MetI) and a solute-binding protein (MetQ).

It is found in the cell inner membrane. The enzyme catalyses L-methionine(out) + ATP + H2O = L-methionine(in) + ADP + phosphate + H(+). It carries out the reaction D-methionine(out) + ATP + H2O = D-methionine(in) + ADP + phosphate + H(+). In terms of biological role, part of the ABC transporter complex MetNIQ involved in methionine import. Responsible for energy coupling to the transport system. The polypeptide is Methionine import ATP-binding protein MetN 1 (Pseudomonas aeruginosa (strain UCBPP-PA14)).